The chain runs to 427 residues: Peptidase B (427 aa).

Lysine 195 and aspartate 200 together coordinate Mn(2+). Residue lysine 207 is part of the active site. 3 residues coordinate Mn(2+): aspartate 218, aspartate 277, and glutamate 279. Arginine 281 is an active-site residue.

It belongs to the peptidase M17 family. In terms of assembly, homohexamer. The cofactor is Mn(2+).

The protein resides in the cytoplasm. The catalysed reaction is Release of an N-terminal amino acid, Xaa, from a peptide or arylamide. Xaa is preferably Glu or Asp but may be other amino acids, including Leu, Met, His, Cys and Gln.. In terms of biological role, probably plays an important role in intracellular peptide degradation. The protein is Peptidase B of Shigella dysenteriae serotype 1 (strain Sd197).